Consider the following 352-residue polypeptide: Photosystem II D2 protein (352 aa).

The Cytoplasmic segment spans residues 1–31 (MTIAVGRAPVERGWFDVLDDWLKRDRFVFIG). A helical transmembrane segment spans residues 32–53 (WSGLLLFPCAFMALGGWLTGTT). The Lumenal, thylakoid segment spans residues 54-108 (FVTSWYTHGLASSYLEGANFLTVAVSSPADAFGHSLLFLWGPEAQGNLTRWFQIG). The helical transmembrane segment at 109 to 131 (GLWPFVALHGAFGLIGFMLRQFE) threads the bilayer. H117 provides a ligand contact to chlorophyll a. Q129 provides a ligand contact to pheophytin a. At 132–140 (ISRLVGIRP) the chain is on the cytoplasmic side. The helical transmembrane segment at 141–162 (YNAIAFSGPIAVFVSVFLMYPL) threads the bilayer. N142 contacts pheophytin a. Residues 163 to 190 (GQSSWFFAPSFGVAGIFRFILFLQGFHN) are Lumenal, thylakoid-facing. The chain crosses the membrane as a helical span at residues 191 to 217 (WTLNPFHMMGVAGILGGALLCAIHGAT). H197 is a binding site for chlorophyll a. Positions 214 and 261 each coordinate a plastoquinone. H214 lines the Fe cation pocket. Residues 218-265 (VENTLFEDGEDSNTFRAFEPTQAEETYSMVTANRFWSQIFGIAFSNKR) are Cytoplasmic-facing. Residues 266–288 (WLHFFMLFVPVTGLWMSSVGIVG) form a helical membrane-spanning segment. H268 is a binding site for Fe cation. The Lumenal, thylakoid segment spans residues 289–352 (LALNLRAYDF…EEVLPRGNAL (64 aa)).

This sequence belongs to the reaction center PufL/M/PsbA/D family. As to quaternary structure, PSII is composed of 1 copy each of membrane proteins PsbA, PsbB, PsbC, PsbD, PsbE, PsbF, PsbH, PsbI, PsbJ, PsbK, PsbL, PsbM, PsbT, PsbX, PsbY, PsbZ, Psb30/Ycf12, peripheral proteins PsbO, CyanoQ (PsbQ), PsbU, PsbV and a large number of cofactors. It forms dimeric complexes. Requires The D1/D2 heterodimer binds P680, chlorophylls that are the primary electron donor of PSII, and subsequent electron acceptors. It shares a non-heme iron and each subunit binds pheophytin, quinone, additional chlorophylls, carotenoids and lipids. There is also a Cl(-1) ion associated with D1 and D2, which is required for oxygen evolution. The PSII complex binds additional chlorophylls, carotenoids and specific lipids. as cofactor.

It localises to the cellular thylakoid membrane. It carries out the reaction 2 a plastoquinone + 4 hnu + 2 H2O = 2 a plastoquinol + O2. Its function is as follows. Photosystem II (PSII) is a light-driven water:plastoquinone oxidoreductase that uses light energy to abstract electrons from H(2)O, generating O(2) and a proton gradient subsequently used for ATP formation. It consists of a core antenna complex that captures photons, and an electron transfer chain that converts photonic excitation into a charge separation. The D1/D2 (PsbA/PsbD) reaction center heterodimer binds P680, the primary electron donor of PSII as well as several subsequent electron acceptors. D2 is needed for assembly of a stable PSII complex. This chain is Photosystem II D2 protein, found in Synechocystis sp. (strain ATCC 27184 / PCC 6803 / Kazusa).